A 366-amino-acid polypeptide reads, in one-letter code: Putative [LysW]-aminoadipate semialdehyde/glutamate semialdehyde transaminase (366 aa).

Pyridoxal 5'-phosphate contacts are provided by residues 90-91 (GT) and Phe117. Substrate is bound at residue Arg120. 202–205 (DEVQ) is a pyridoxal 5'-phosphate binding site. Lys230 bears the N6-(pyridoxal phosphate)lysine mark. Ser254 is a substrate binding site. Residue Thr255 participates in pyridoxal 5'-phosphate binding.

Belongs to the class-III pyridoxal-phosphate-dependent aminotransferase family. LysJ subfamily. As to quaternary structure, homodimer. It depends on pyridoxal 5'-phosphate as a cofactor.

Its subcellular location is the cytoplasm. The catalysed reaction is [amino-group carrier protein]-C-terminal-gamma-(L-lysyl)-L-glutamate + 2-oxoglutarate = [amino-group carrier protein]-C-terminal-N-(1-carboxy-5-oxopentan-1-yl)-L-glutamine + L-glutamate. It catalyses the reaction [amino-group carrier protein]-C-terminal-gamma-(L-ornithyl)-L-glutamate + 2-oxoglutarate = [amino-group carrier protein]-C-terminal-gamma-(L-glutamyl-5-semialdehyde)-L-glutamate + L-glutamate. Its pathway is amino-acid biosynthesis; L-lysine biosynthesis via AAA pathway; L-lysine from L-alpha-aminoadipate (Thermus route): step 4/5. It participates in amino-acid biosynthesis; L-arginine biosynthesis. Its function is as follows. Involved in both the arginine and lysine biosynthetic pathways. The protein is Putative [LysW]-aminoadipate semialdehyde/glutamate semialdehyde transaminase of Pyrococcus horikoshii (strain ATCC 700860 / DSM 12428 / JCM 9974 / NBRC 100139 / OT-3).